Reading from the N-terminus, the 79-residue chain is Small ribosomal subunit protein bS18 (79 aa).

Belongs to the bacterial ribosomal protein bS18 family. As to quaternary structure, part of the 30S ribosomal subunit. Forms a tight heterodimer with protein bS6.

In terms of biological role, binds as a heterodimer with protein bS6 to the central domain of the 16S rRNA, where it helps stabilize the platform of the 30S subunit. The chain is Small ribosomal subunit protein bS18 from Streptococcus pneumoniae (strain Hungary19A-6).